The following is a 380-amino-acid chain: Protein GOLM2 (380 aa).

Position 1 is an N-acetylmethionine (M1). The Cytoplasmic segment spans residues 1–14; it reads MVGFGANRRAGRLP. A helical; Signal-anchor for type II membrane protein membrane pass occupies residues 15 to 35; it reads SLVLAVLLVVIAVLAFNYWSI. Residues 35–195 are a coiled coil; the sequence is ISSRHVLLQE…QFLQEQKQEA (161 aa). Residues 36–380 are Lumenal-facing; the sequence is SSRHVLLQEE…YGKQRFNDAL (345 aa). Basic and acidic residues-rich tracts occupy residues 192 to 212 and 227 to 247; these read KQEA…DNHA and KNEE…KRGG. Residues 192 to 254 are disordered; the sequence is KQEAHKFESK…RGGDAGMPGI (63 aa). 2 positions are modified to phosphoserine: S233 and S275. The interval 280–380 is disordered; that stretch reads ESHQVISHLP…YGKQRFNDAL (101 aa). Residues 305 to 321 show a composition bias toward polar residues; the sequence is NHNGNSRTSKQNPSNPL. Positions 344–380 are enriched in basic and acidic residues; that stretch reads ATKDRAGDFHKLKQNDEERELQMDPADYGKQRFNDAL.

This sequence belongs to the GOLM family.

The protein localises to the membrane. The protein is Protein GOLM2 (GOLM2) of Bos taurus (Bovine).